The chain runs to 347 residues: Putative histone PARylation factor 1-like (347 aa).

Met1 is subject to N-acetylmethionine. Residues Lys187 and Lys234 each carry the N6-acetyllysine modification.

Belongs to the HPF1 family.

This is Putative histone PARylation factor 1-like from Homo sapiens (Human).